Reading from the N-terminus, the 347-residue chain is Protein RecA (347 aa).

ATP is bound at residue 65 to 72 (GPESSGKT). Positions 327-336 (KFEPTELSRE) are enriched in basic and acidic residues. Residues 327-347 (KFEPTELSREEGDEDTLEDAM) are disordered. Residues 337 to 347 (EGDEDTLEDAM) are compositionally biased toward acidic residues.

This sequence belongs to the RecA family.

Its subcellular location is the cytoplasm. Can catalyze the hydrolysis of ATP in the presence of single-stranded DNA, the ATP-dependent uptake of single-stranded DNA by duplex DNA, and the ATP-dependent hybridization of homologous single-stranded DNAs. It interacts with LexA causing its activation and leading to its autocatalytic cleavage. This chain is Protein RecA, found in Xylella fastidiosa (strain M12).